We begin with the raw amino-acid sequence, 150 residues long: MTTEKKTMNISEIQELLPHRYPFLLIDRVVDFQEEKYLHAIKNVSVNEPQFTGHFPQLPVFPGVLILEAMAQATGLLAFKSFGAPSENELYYFASVDGAKFRKPVVPGDQLIIEVEFIKERRGIAAFTGVAKVDGDVVCSAELKCARREF.

Residue His-54 is part of the active site.

This sequence belongs to the thioester dehydratase family. FabZ subfamily.

Its subcellular location is the cytoplasm. The catalysed reaction is a (3R)-hydroxyacyl-[ACP] = a (2E)-enoyl-[ACP] + H2O. Its function is as follows. Involved in unsaturated fatty acids biosynthesis. Catalyzes the dehydration of short chain beta-hydroxyacyl-ACPs and long chain saturated and unsaturated beta-hydroxyacyl-ACPs. In Vibrio vulnificus (strain CMCP6), this protein is 3-hydroxyacyl-[acyl-carrier-protein] dehydratase FabZ.